We begin with the raw amino-acid sequence, 243 residues long: Killer cell lectin-like receptor subfamily I member 1 (243 aa).

At 1–80 the chain is on the cytoplasmic side; sequence MPHSKHRDYT…RQGPKSAVWR (80 aa). 2 short sequence motifs (ITIM motif) span residues 16-21 and 47-52; these read IPYTEL and LKYAEL. A helical; Signal-anchor for type II membrane protein membrane pass occupies residues 81–101; it reads VVTCVLGVLCVVLMITMGILV. The Extracellular portion of the chain corresponds to 102–243; that stretch reads PKLFSGQEEQ…KPYACEFNKM (142 aa). N-linked (GlcNAc...) asparagine glycans are attached at residues N123, N191, N194, N200, and N214. Residues 137–239 form the C-type lectin domain; the sequence is FGNNFYLFFR…CSSKKPYACE (103 aa). Intrachain disulfides connect C158–C238 and C217–C230.

In terms of assembly, heterodimer with KLRE1. Interacts with PTPN6. As to expression, expressed in natural killer (NK) cells.

It localises to the cell membrane. In terms of biological role, lectin-like receptor for natural killer (NK) cells. Heterodimer formation with KLRE1 mediates inhibition of NK cell cytolytic activity. The chain is Killer cell lectin-like receptor subfamily I member 1 from Rattus norvegicus (Rat).